Reading from the N-terminus, the 329-residue chain is 7,8-didemethyl-8-hydroxy-5-deazariboflavin synthase (329 aa).

A Radical SAM core domain is found at 1-235 (MFIPVTNICR…SDVSVQVAPN (235 aa)). 3 residues coordinate [4Fe-4S] cluster: cysteine 9, cysteine 13, and cysteine 16.

It belongs to the radical SAM superfamily. CofG family. As to quaternary structure, consists of two subunits, CofG and CofH. Requires [4Fe-4S] cluster as cofactor.

It catalyses the reaction 5-amino-5-(4-hydroxybenzyl)-6-(D-ribitylimino)-5,6-dihydrouracil + S-adenosyl-L-methionine = 7,8-didemethyl-8-hydroxy-5-deazariboflavin + 5'-deoxyadenosine + L-methionine + NH4(+) + H(+). Its pathway is cofactor biosynthesis; coenzyme F0 biosynthesis. In terms of biological role, catalyzes the radical-mediated synthesis of 7,8-didemethyl-8-hydroxy-5-deazariboflavin from 5-amino-5-(4-hydroxybenzyl)-6-(D-ribitylimino)-5,6-dihydrouracil. The chain is 7,8-didemethyl-8-hydroxy-5-deazariboflavin synthase from Methanosarcina acetivorans (strain ATCC 35395 / DSM 2834 / JCM 12185 / C2A).